The primary structure comprises 145 residues: D-aminoacyl-tRNA deacylase (145 aa).

Residues 137–138 (GP) carry the Gly-cisPro motif, important for rejection of L-amino acids motif.

The protein belongs to the DTD family. As to quaternary structure, homodimer.

The protein localises to the cytoplasm. The enzyme catalyses glycyl-tRNA(Ala) + H2O = tRNA(Ala) + glycine + H(+). It carries out the reaction a D-aminoacyl-tRNA + H2O = a tRNA + a D-alpha-amino acid + H(+). Functionally, an aminoacyl-tRNA editing enzyme that deacylates mischarged D-aminoacyl-tRNAs. Also deacylates mischarged glycyl-tRNA(Ala), protecting cells against glycine mischarging by AlaRS. Acts via tRNA-based rather than protein-based catalysis; rejects L-amino acids rather than detecting D-amino acids in the active site. By recycling D-aminoacyl-tRNA to D-amino acids and free tRNA molecules, this enzyme counteracts the toxicity associated with the formation of D-aminoacyl-tRNA entities in vivo and helps enforce protein L-homochirality. This chain is D-aminoacyl-tRNA deacylase, found in Shewanella woodyi (strain ATCC 51908 / MS32).